Consider the following 236-residue polypeptide: Phosphoribosylaminoimidazole-succinocarboxamide synthase (236 aa).

The protein belongs to the SAICAR synthetase family.

The catalysed reaction is 5-amino-1-(5-phospho-D-ribosyl)imidazole-4-carboxylate + L-aspartate + ATP = (2S)-2-[5-amino-1-(5-phospho-beta-D-ribosyl)imidazole-4-carboxamido]succinate + ADP + phosphate + 2 H(+). It participates in purine metabolism; IMP biosynthesis via de novo pathway; 5-amino-1-(5-phospho-D-ribosyl)imidazole-4-carboxamide from 5-amino-1-(5-phospho-D-ribosyl)imidazole-4-carboxylate: step 1/2. This is Phosphoribosylaminoimidazole-succinocarboxamide synthase from Rickettsia massiliae (strain Mtu5).